The sequence spans 465 residues: Argininosuccinate lyase (465 aa).

The protein belongs to the lyase 1 family. Argininosuccinate lyase subfamily.

It localises to the cytoplasm. The catalysed reaction is 2-(N(omega)-L-arginino)succinate = fumarate + L-arginine. It participates in amino-acid biosynthesis; L-arginine biosynthesis; L-arginine from L-ornithine and carbamoyl phosphate: step 3/3. This chain is Argininosuccinate lyase, found in Clostridium botulinum (strain Eklund 17B / Type B).